The following is a 461-amino-acid chain: Glycogen synthase (461 aa).

K15 contributes to the ADP-alpha-D-glucose binding site.

Belongs to the glycosyltransferase 1 family. Bacterial/plant glycogen synthase subfamily.

The catalysed reaction is [(1-&gt;4)-alpha-D-glucosyl](n) + ADP-alpha-D-glucose = [(1-&gt;4)-alpha-D-glucosyl](n+1) + ADP + H(+). It participates in glycan biosynthesis; glycogen biosynthesis. Synthesizes alpha-1,4-glucan chains using ADP-glucose. This is Glycogen synthase from Fusobacterium nucleatum subsp. nucleatum (strain ATCC 25586 / DSM 15643 / BCRC 10681 / CIP 101130 / JCM 8532 / KCTC 2640 / LMG 13131 / VPI 4355).